Consider the following 187-residue polypeptide: GTP cyclohydrolase 1 (187 aa).

Zn(2+) is bound by residues cysteine 76, histidine 79, and cysteine 148.

This sequence belongs to the GTP cyclohydrolase I family. Toroid-shaped homodecamer, composed of two pentamers of five dimers.

It carries out the reaction GTP + H2O = 7,8-dihydroneopterin 3'-triphosphate + formate + H(+). It functions in the pathway cofactor biosynthesis; 7,8-dihydroneopterin triphosphate biosynthesis; 7,8-dihydroneopterin triphosphate from GTP: step 1/1. This is GTP cyclohydrolase 1 from Streptococcus thermophilus (strain CNRZ 1066).